Consider the following 138-residue polypeptide: Large ribosomal subunit protein bL17 (138 aa).

It belongs to the bacterial ribosomal protein bL17 family. In terms of assembly, part of the 50S ribosomal subunit. Contacts protein L32.

In Dinoroseobacter shibae (strain DSM 16493 / NCIMB 14021 / DFL 12), this protein is Large ribosomal subunit protein bL17.